The following is a 273-amino-acid chain: Protein INAPERTURATE POLLEN1 (273 aa).

Residues 12 to 267 enclose the DOG1 domain; the sequence is SRRFNDFYED…KDQILLQDFE (256 aa).

As to expression, expressed only in anthers and in pollen. Not detected in other flower tissues, stems, leaves and siliques.

The protein resides in the cytoplasm. Its function is as follows. Required for the formation of pollen surface apertures, which arise by restriction of exine deposition at specific sites. The aperture length depends on the INP1 dosage. Does not play a role in specifying the number or position of apertures. Acts in a sporophytic manner. In Arabidopsis thaliana (Mouse-ear cress), this protein is Protein INAPERTURATE POLLEN1.